The chain runs to 244 residues: Globin-like protein 9 (244 aa).

Residues 1–38 are disordered; that stretch reads MRRMAKYDRSYSMQDAHGPNGLARRGTQRGCSRSKSTR. One can recognise a Globin domain in the interval 47 to 200; that stretch reads SLTFSQKQAL…LIDELRGGFE (154 aa). Residues His-111 and His-143 each contribute to the heme site.

Belongs to the globin family.

The sequence is that of Globin-like protein 9 from Caenorhabditis briggsae.